The sequence spans 101 residues: MTSKLAVALLAAFLLSAALCEAAVLSRMSTELRCQCIKTHSTPFHPKFIKELRVIESGPHCENSEIIVKLTNGKEVCLDPKEKWVQKVVQAFLKRAEKQDP.

Positions 1-22 are cleaved as a signal peptide; that stretch reads MTSKLAVALLAAFLLSAALCEA. A Citrulline modification is found at Arg-27. 2 disulfide bridges follow: Cys-34-Cys-61 and Cys-36-Cys-77.

The protein belongs to the intercrine alpha (chemokine CxC) family. As to quaternary structure, homodimer. Interacts with TNFAIP6 (via Link domain); this interaction interferes with chemokine binding to glycosaminoglycans. Citrullination at Arg-27 prevents proteolysis, and dampens tissue inflammation, it also enhances leukocytosis, possibly through impaired chemokine clearance from the blood circulation.

It is found in the secreted. Functionally, chemotactic factor that mediates inflammatory response by attracting neutrophils, basophils, and T-cells to clear pathogens and protect the host from infection. Also plays an important role in neutrophil activation. Released in response to an inflammatory stimulus, exerts its effect by binding to the G-protein-coupled receptors CXCR1 and CXCR2, primarily found in neutrophils, monocytes and endothelial cells. G-protein heterotrimer (alpha, beta, gamma subunits) constitutively binds to CXCR1/CXCR2 receptor and activation by IL8 leads to beta and gamma subunits release from Galpha (GNAI2 in neutrophils) and activation of several downstream signaling pathways including PI3K and MAPK pathways. This chain is Interleukin-8 (CXCL8), found in Ovis aries (Sheep).